A 403-amino-acid polypeptide reads, in one-letter code: F-box protein At2g40925 (403 aa).

Residues 21-71 (NRHDCEIPPDLMIEILIRLPTKSFMRFKCVSKQWSPLISGRYFCNRLFTCV) enclose the F-box domain.

This Arabidopsis thaliana (Mouse-ear cress) protein is F-box protein At2g40925.